The chain runs to 339 residues: Small ribosomal subunit biogenesis GTPase RsgA (339 aa).

The region spanning 111-271 (MRGLLKPVAA…LIDSPGIREF (161 aa)) is the CP-type G domain. Residues 159-162 (NKAD) and 213-221 (GQSGVGKSS) each bind GTP. Positions 295, 300, 302, and 308 each coordinate Zn(2+).

This sequence belongs to the TRAFAC class YlqF/YawG GTPase family. RsgA subfamily. Monomer. Associates with 30S ribosomal subunit, binds 16S rRNA. The cofactor is Zn(2+).

Its subcellular location is the cytoplasm. One of several proteins that assist in the late maturation steps of the functional core of the 30S ribosomal subunit. Helps release RbfA from mature subunits. May play a role in the assembly of ribosomal proteins into the subunit. Circularly permuted GTPase that catalyzes slow GTP hydrolysis, GTPase activity is stimulated by the 30S ribosomal subunit. In Pseudomonas aeruginosa (strain ATCC 15692 / DSM 22644 / CIP 104116 / JCM 14847 / LMG 12228 / 1C / PRS 101 / PAO1), this protein is Small ribosomal subunit biogenesis GTPase RsgA.